Consider the following 539-residue polypeptide: Eukaryotic translation initiation factor 3 subunit L (539 aa).

The 213-residue stretch at Thr302–His514 folds into the PCI domain.

This sequence belongs to the eIF-3 subunit L family. In terms of assembly, component of the eukaryotic translation initiation factor 3 (eIF-3) complex.

The protein localises to the cytoplasm. In terms of biological role, component of the eukaryotic translation initiation factor 3 (eIF-3) complex, which is involved in protein synthesis of a specialized repertoire of mRNAs and, together with other initiation factors, stimulates binding of mRNA and methionyl-tRNAi to the 40S ribosome. The eIF-3 complex specifically targets and initiates translation of a subset of mRNAs involved in cell proliferation. This is Eukaryotic translation initiation factor 3 subunit L from Anopheles gambiae (African malaria mosquito).